A 471-amino-acid polypeptide reads, in one-letter code: Monocarboxylate transporter 4 (471 aa).

Residues 1-17 (MGGAVVDEGPTGIKAPD) are Cytoplasmic-facing. A helical transmembrane segment spans residues 18–38 (GGWGWAVLFGCFIITGFSYAF). The Extracellular segment spans residues 39–61 (PKAVSVFFKELMHEFGIGYSDTA). The helical transmembrane segment at 62-82 (WISSILLAMLYGTGPLCSMCV) threads the bilayer. Over 83–84 (NR) the chain is Cytoplasmic. Residues 85-105 (FGCRPVMLVGGLFASLGMVAA) form a helical membrane-spanning segment. Residues 106-109 (SFCR) are Extracellular-facing. The helical transmembrane segment at 110 to 130 (SIIQIYLTTGVITGLGLALNF) threads the bilayer. Residues 131-149 (QPSLIMLNRYFNKRRPMAN) lie on the Cytoplasmic side of the membrane. Residues 150–170 (GLAAAGSPVFLCALSPLGQLL) form a helical membrane-spanning segment. Residues 171–179 (QDHYGWRGG) are Extracellular-facing. A helical membrane pass occupies residues 180-200 (FLILGGLLLNCCVCAALMRPL). Topologically, residues 201–231 (VAPQASGGAEPHGPQRPSPRLLDLSVFRDRG) are cytoplasmic. Residues 232–252 (FLIYAVAASIMVLGLFVPPVF) traverse the membrane as a helical segment. Over 253–267 (VVSYAKDMGVPDTKA) the chain is Extracellular. Residues 268-288 (AFLLTILGFIDIFARPTAGFI) form a helical membrane-spanning segment. Over 289–298 (TGLKKVRPYS) the chain is Cytoplasmic. The helical transmembrane segment at 299–319 (VYLFSFAMFFNGFTDLTGSTA) threads the bilayer. Residues 320–321 (SD) lie on the Extracellular side of the membrane. The helical transmembrane segment at 322-342 (YGGLVVFCIFFGISYGMVGAL) threads the bilayer. Topologically, residues 343–355 (QFEVLMAIVGTQK) are cytoplasmic. Residues 356-376 (FSSAIGLVLLLEAVAVLIGPP) form a helical membrane-spanning segment. Over 377-391 (SGGKLLDATKVYKYV) the chain is Extracellular. A helical transmembrane segment spans residues 392–412 (FILAGAEVLTSSLVLLLGNFF). Over 413–471 (CIGKRKRPEVTKPEEVASEEEKLHKPPVDVRVDSREVEHFLKAEPEKNGEVVHTPETSV) the chain is Cytoplasmic. Basolateral sorting signal stretches follow at residues 429–447 (ASEEEKLHKPPVDVRVDSR) and 447–471 (REVEHFLKAEPEKNGEVVHTPETSV). S430 carries the post-translational modification Phosphoserine. T466 carries the phosphothreonine modification. Phosphoserine is present on S470.

Belongs to the major facilitator superfamily. Monocarboxylate porter (TC 2.A.1.13) family. In terms of assembly, interacts with BSG; interaction mediates SLC16A3 targeting to the plasma membrane. As to expression, detected in testis, small intestine, parotid gland, lung and brain. Small amounts are detected in heart, kidney and spleen. Expressed in skeletal muscle.

Its subcellular location is the cell membrane. It localises to the basolateral cell membrane. It catalyses the reaction (S)-lactate(in) + H(+)(in) = (S)-lactate(out) + H(+)(out). The catalysed reaction is pyruvate(out) + H(+)(out) = pyruvate(in) + H(+)(in). Proton-dependent transporter of monocarboxylates such as L-lactate and pyruvate. Plays a predominant role in the L-lactate efflux from highly glycolytic cells. The sequence is that of Monocarboxylate transporter 4 (Slc16a3) from Rattus norvegicus (Rat).